A 389-amino-acid chain; its full sequence is Nicotinate phosphoribosyltransferase (389 aa).

Phosphohistidine; by autocatalysis is present on His-216.

Belongs to the NAPRTase family. Transiently phosphorylated on a His residue during the reaction cycle. Phosphorylation strongly increases the affinity for substrates and increases the rate of nicotinate D-ribonucleotide production. Dephosphorylation regenerates the low-affinity form of the enzyme, leading to product release.

It carries out the reaction nicotinate + 5-phospho-alpha-D-ribose 1-diphosphate + ATP + H2O = nicotinate beta-D-ribonucleotide + ADP + phosphate + diphosphate. It functions in the pathway cofactor biosynthesis; NAD(+) biosynthesis; nicotinate D-ribonucleotide from nicotinate: step 1/1. Functionally, catalyzes the synthesis of beta-nicotinate D-ribonucleotide from nicotinate and 5-phospho-D-ribose 1-phosphate at the expense of ATP. The sequence is that of Nicotinate phosphoribosyltransferase from Ralstonia nicotianae (strain ATCC BAA-1114 / GMI1000) (Ralstonia solanacearum).